The sequence spans 217 residues: Serine acetyltransferase (217 aa).

The protein belongs to the transferase hexapeptide repeat family.

Its subcellular location is the cytoplasm. The enzyme catalyses L-serine + acetyl-CoA = O-acetyl-L-serine + CoA. The protein operates within amino-acid biosynthesis; L-cysteine biosynthesis; L-cysteine from L-serine: step 1/2. Inhibited by cysteine. Functionally, catalyzes the acetylation of serine by acetyl-CoA to produce O-acetylserine (OAS). The sequence is that of Serine acetyltransferase (cysE) from Bacillus subtilis (strain 168).